The chain runs to 104 residues: Small ribosomal subunit protein uS10 (104 aa).

It belongs to the universal ribosomal protein uS10 family. As to quaternary structure, part of the 30S ribosomal subunit.

Functionally, involved in the binding of tRNA to the ribosomes. This Ralstonia nicotianae (strain ATCC BAA-1114 / GMI1000) (Ralstonia solanacearum) protein is Small ribosomal subunit protein uS10.